Reading from the N-terminus, the 445-residue chain is Phosphoglucosamine mutase (445 aa).

Serine 102 functions as the Phosphoserine intermediate in the catalytic mechanism. Mg(2+)-binding residues include serine 102, aspartate 241, aspartate 243, and aspartate 245. Serine 102 bears the Phosphoserine mark.

It belongs to the phosphohexose mutase family. The cofactor is Mg(2+). In terms of processing, activated by phosphorylation.

The catalysed reaction is alpha-D-glucosamine 1-phosphate = D-glucosamine 6-phosphate. In terms of biological role, catalyzes the conversion of glucosamine-6-phosphate to glucosamine-1-phosphate. In Aliivibrio salmonicida (strain LFI1238) (Vibrio salmonicida (strain LFI1238)), this protein is Phosphoglucosamine mutase.